Here is a 215-residue protein sequence, read N- to C-terminus: Probable phosphoglycerate mutase GpmB (215 aa).

Substrate-binding positions include 8–15, 21–22, arginine 58, arginine 60, 82–85, 104–105, and 151–152; these read RHGETQWN, QG, ELDM, RR, and GI. The Tele-phosphohistidine intermediate role is filled by histidine 9. The active-site Proton donor/acceptor is glutamate 82.

The protein belongs to the phosphoglycerate mutase family. GpmB subfamily.

It carries out the reaction (2R)-2-phosphoglycerate = (2R)-3-phosphoglycerate. The protein operates within carbohydrate degradation; glycolysis; pyruvate from D-glyceraldehyde 3-phosphate: step 3/5. In Citrobacter koseri (strain ATCC BAA-895 / CDC 4225-83 / SGSC4696), this protein is Probable phosphoglycerate mutase GpmB.